A 317-amino-acid polypeptide reads, in one-letter code: MTVKLICTSHTPLMGFGSPPEATEKHVRQVFQQLAEQIKDYDPQLIVIFAPDHFNGFFYDLMPAFCVGVRANAVGDWDIGKGPLNVPENTAKDLISALYDSGIDVAHSWRMQVDHGFTQPLMLLCQNLQRYPTIPIFINCAAKPLPTCRRAVELGRAVGQFLFTTDQRVLLLGSGGLSHDPPIPQMGQVPPEVEEGLIAGRNPTKEARQKRQIRVIEVGKSLARGENIVAPLNPQWDDELLRIFCSGDIRRLASLTEGGIAIQGGKGGQEIRCWIAAFAALSVYGEYKAQRHYYQPIKEWLAGMAMVSAQPVTQIGA.

H115 (proton donor) is an active-site residue. H179 acts as the Proton acceptor in catalysis.

The protein belongs to the LigB/MhpB extradiol dioxygenase family. As to quaternary structure, homotetramer. The cofactor is Fe(2+).

It carries out the reaction 3-(2,3-dihydroxyphenyl)propanoate + O2 = (2Z,4E)-2-hydroxy-6-oxonona-2,4-dienedioate + H(+). The enzyme catalyses (2E)-3-(2,3-dihydroxyphenyl)prop-2-enoate + O2 = (2Z,4E,7E)-2-hydroxy-6-oxonona-2,4,7-trienedioate + H(+). Its pathway is aromatic compound metabolism; 3-phenylpropanoate degradation. Its function is as follows. Catalyzes the non-heme iron(II)-dependent oxidative cleavage of 2,3-dihydroxyphenylpropionic acid and 2,3-dihydroxicinnamic acid into 2-hydroxy-6-ketononadienedioate and 2-hydroxy-6-ketononatrienedioate, respectively. This chain is 2,3-dihydroxyphenylpropionate/2,3-dihydroxicinnamic acid 1,2-dioxygenase, found in Photorhabdus laumondii subsp. laumondii (strain DSM 15139 / CIP 105565 / TT01) (Photorhabdus luminescens subsp. laumondii).